Consider the following 334-residue polypeptide: ADP-L-glycero-D-manno-heptose-6-epimerase (334 aa).

Residues 11 to 12 (FI), 32 to 33 (DN), Lys-39, Lys-54, 77 to 81 (QGACS), and Asn-94 contribute to the NADP(+) site. Residue Tyr-141 is the Proton acceptor of the active site. Residue Lys-145 participates in NADP(+) binding. Position 171 (Asn-171) interacts with substrate. Residues Val-172 and Lys-180 each contribute to the NADP(+) site. Lys-180 (proton acceptor) is an active-site residue. Residues Arg-182, His-189, 203-206 (FGSN), Arg-216, and Tyr-295 contribute to the substrate site.

This sequence belongs to the NAD(P)-dependent epimerase/dehydratase family. HldD subfamily. In terms of assembly, homopentamer. NADP(+) serves as cofactor.

The catalysed reaction is ADP-D-glycero-beta-D-manno-heptose = ADP-L-glycero-beta-D-manno-heptose. The protein operates within nucleotide-sugar biosynthesis; ADP-L-glycero-beta-D-manno-heptose biosynthesis; ADP-L-glycero-beta-D-manno-heptose from D-glycero-beta-D-manno-heptose 7-phosphate: step 4/4. Its pathway is bacterial outer membrane biogenesis; LOS core biosynthesis. Catalyzes the interconversion between ADP-D-glycero-beta-D-manno-heptose and ADP-L-glycero-beta-D-manno-heptose via an epimerization at carbon 6 of the heptose. The chain is ADP-L-glycero-D-manno-heptose-6-epimerase from Neisseria meningitidis serogroup B (strain ATCC BAA-335 / MC58).